We begin with the raw amino-acid sequence, 485 residues long: Glutamyl-tRNA(Gln) amidotransferase subunit A 1 (485 aa).

Catalysis depends on charge relay system residues lysine 79 and serine 154. The active-site Acyl-ester intermediate is serine 178.

Belongs to the amidase family. GatA subfamily. As to quaternary structure, heterotrimer of A, B and C subunits.

It catalyses the reaction L-glutamyl-tRNA(Gln) + L-glutamine + ATP + H2O = L-glutaminyl-tRNA(Gln) + L-glutamate + ADP + phosphate + H(+). Allows the formation of correctly charged Gln-tRNA(Gln) through the transamidation of misacylated Glu-tRNA(Gln) in organisms which lack glutaminyl-tRNA synthetase. The reaction takes place in the presence of glutamine and ATP through an activated gamma-phospho-Glu-tRNA(Gln). The polypeptide is Glutamyl-tRNA(Gln) amidotransferase subunit A 1 (gatA1) (Clostridium acetobutylicum (strain ATCC 824 / DSM 792 / JCM 1419 / IAM 19013 / LMG 5710 / NBRC 13948 / NRRL B-527 / VKM B-1787 / 2291 / W)).